A 72-amino-acid chain; its full sequence is Small ribosomal subunit protein bS18c (72 aa).

The protein belongs to the bacterial ribosomal protein bS18 family. In terms of assembly, part of the 30S ribosomal subunit.

It localises to the plastid. The protein resides in the chloroplast. The protein is Small ribosomal subunit protein bS18c of Phaeodactylum tricornutum (strain CCAP 1055/1).